A 739-amino-acid polypeptide reads, in one-letter code: Polyribonucleotide nucleotidyltransferase (739 aa).

The Mg(2+) site is built by Asp-487 and Asp-493. Positions 554–613 (PRIETMQIPTDKIRDVIGTGGKVIREIVEKTGAKINIEDTGVVKIASADGKAIKAAYNWI) constitute a KH domain. The S1 motif domain maps to 623-691 (GVIYDGTIVK…DRGKIRLSMK (69 aa)). Residues 694-739 (DQQTGEDITDKIKAQRDAERAERGDEPREPREGGRHRGERRREAGE) are disordered. The segment covering 701 to 739 (ITDKIKAQRDAERAERGDEPREPREGGRHRGERRREAGE) has biased composition (basic and acidic residues).

It belongs to the polyribonucleotide nucleotidyltransferase family. Mg(2+) serves as cofactor.

It is found in the cytoplasm. It catalyses the reaction RNA(n+1) + phosphate = RNA(n) + a ribonucleoside 5'-diphosphate. Functionally, involved in mRNA degradation. Catalyzes the phosphorolysis of single-stranded polyribonucleotides processively in the 3'- to 5'-direction. In Methylobacterium radiotolerans (strain ATCC 27329 / DSM 1819 / JCM 2831 / NBRC 15690 / NCIMB 10815 / 0-1), this protein is Polyribonucleotide nucleotidyltransferase.